The following is a 250-amino-acid chain: 5'-nucleotidase SurE (250 aa).

Asp8, Asp9, Ser39, and Asn92 together coordinate a divalent metal cation.

The protein belongs to the SurE nucleotidase family. A divalent metal cation serves as cofactor.

Its subcellular location is the cytoplasm. The catalysed reaction is a ribonucleoside 5'-phosphate + H2O = a ribonucleoside + phosphate. Functionally, nucleotidase that shows phosphatase activity on nucleoside 5'-monophosphates. In Vibrio cholerae serotype O1 (strain ATCC 39315 / El Tor Inaba N16961), this protein is 5'-nucleotidase SurE.